Reading from the N-terminus, the 390-residue chain is Branched-chain-amino-acid aminotransferase (390 aa).

K225 is modified (N6-(pyridoxal phosphate)lysine).

Belongs to the class-IV pyridoxal-phosphate-dependent aminotransferase family. In terms of assembly, homodimer. Pyridoxal 5'-phosphate serves as cofactor.

The enzyme catalyses L-leucine + 2-oxoglutarate = 4-methyl-2-oxopentanoate + L-glutamate. It catalyses the reaction L-isoleucine + 2-oxoglutarate = (S)-3-methyl-2-oxopentanoate + L-glutamate. The catalysed reaction is L-valine + 2-oxoglutarate = 3-methyl-2-oxobutanoate + L-glutamate. Catalyzes the first reaction in the catabolism of the essential branched chain amino acids leucine, isoleucine, and valine. The polypeptide is Branched-chain-amino-acid aminotransferase (Monosiga brevicollis (Choanoflagellate)).